A 331-amino-acid chain; its full sequence is Aspartate carbamoyltransferase catalytic subunit (331 aa).

Residues Arg-66 and Thr-67 each contribute to the carbamoyl phosphate site. An L-aspartate-binding site is contributed by Lys-94. The carbamoyl phosphate site is built by Arg-116, His-149, and Gln-152. Arg-189 and Arg-243 together coordinate L-aspartate. Positions 284 and 285 each coordinate carbamoyl phosphate.

This sequence belongs to the aspartate/ornithine carbamoyltransferase superfamily. ATCase family. Heterododecamer (2C3:3R2) of six catalytic PyrB chains organized as two trimers (C3), and six regulatory PyrI chains organized as three dimers (R2).

The enzyme catalyses carbamoyl phosphate + L-aspartate = N-carbamoyl-L-aspartate + phosphate + H(+). It participates in pyrimidine metabolism; UMP biosynthesis via de novo pathway; (S)-dihydroorotate from bicarbonate: step 2/3. In terms of biological role, catalyzes the condensation of carbamoyl phosphate and aspartate to form carbamoyl aspartate and inorganic phosphate, the committed step in the de novo pyrimidine nucleotide biosynthesis pathway. The polypeptide is Aspartate carbamoyltransferase catalytic subunit (Thermosynechococcus vestitus (strain NIES-2133 / IAM M-273 / BP-1)).